The sequence spans 648 residues: Protein teflon (648 aa).

The segment at Leu-33 to His-56 adopts a C2H2-type 1 zinc-finger fold. Disordered stretches follow at residues Ser-76–Asn-127 and Glu-146–Ser-170. Positions Val-85–Ser-94 are enriched in polar residues. Basic and acidic residues predominate over residues Gly-96 to Glu-107. Residues Tyr-598–Gln-620 form a C2H2-type 2; degenerate zinc finger. The C2H2-type 3 zinc-finger motif lies at Tyr-624–His-647.

It belongs to the Teflon family.

Its subcellular location is the nucleus. The protein localises to the chromosome. In terms of biological role, specifically required in males for proper segregation of autosomal bivalents at meiosis I. Expression is required in the male germ line prior to spermatocyte stage S4. May have a role as a bridging molecule maintaining adhesion to hold autosome bivalents together via heterochromatic connections. This Drosophila yakuba (Fruit fly) protein is Protein teflon.